We begin with the raw amino-acid sequence, 230 residues long: 7-cyano-7-deazaguanine synthase (230 aa).

14–24 (LSGGLDSTTTL) is an ATP binding site. Zn(2+) is bound by residues C194, C204, C207, and C210.

Belongs to the QueC family. Zn(2+) is required as a cofactor.

The enzyme catalyses 7-carboxy-7-deazaguanine + NH4(+) + ATP = 7-cyano-7-deazaguanine + ADP + phosphate + H2O + H(+). It functions in the pathway purine metabolism; 7-cyano-7-deazaguanine biosynthesis. Functionally, catalyzes the ATP-dependent conversion of 7-carboxy-7-deazaguanine (CDG) to 7-cyano-7-deazaguanine (preQ(0)). The sequence is that of 7-cyano-7-deazaguanine synthase from Ruthia magnifica subsp. Calyptogena magnifica.